The sequence spans 429 residues: Ribosomal RNA small subunit methyltransferase B (429 aa).

S-adenosyl-L-methionine contacts are provided by residues 254–260 (CAAPGGK), Asp-277, Asp-303, and Asp-322. Cys-375 acts as the Nucleophile in catalysis.

This sequence belongs to the class I-like SAM-binding methyltransferase superfamily. RsmB/NOP family.

The protein resides in the cytoplasm. It catalyses the reaction cytidine(967) in 16S rRNA + S-adenosyl-L-methionine = 5-methylcytidine(967) in 16S rRNA + S-adenosyl-L-homocysteine + H(+). Functionally, specifically methylates the cytosine at position 967 (m5C967) of 16S rRNA. The chain is Ribosomal RNA small subunit methyltransferase B from Serratia proteamaculans (strain 568).